A 306-amino-acid polypeptide reads, in one-letter code: N-acetylmuramic acid 6-phosphate etherase (306 aa).

The SIS domain occupies 59–222; it reads TAQALGRGGR…STGVMVCLGK (164 aa). The active-site Proton donor is Glu87. Residue Glu118 is part of the active site.

Belongs to the GCKR-like family. MurNAc-6-P etherase subfamily. As to quaternary structure, homodimer.

The catalysed reaction is N-acetyl-D-muramate 6-phosphate + H2O = N-acetyl-D-glucosamine 6-phosphate + (R)-lactate. Its pathway is amino-sugar metabolism; N-acetylmuramate degradation. Its function is as follows. Specifically catalyzes the cleavage of the D-lactyl ether substituent of MurNAc 6-phosphate, producing GlcNAc 6-phosphate and D-lactate. The protein is N-acetylmuramic acid 6-phosphate etherase of Rippkaea orientalis (strain PCC 8801 / RF-1) (Cyanothece sp. (strain PCC 8801)).